The primary structure comprises 147 residues: Hemoglobin subunit beta (147 aa).

The Globin domain occupies 3 to 147; it reads LLSAEENAHV…VANALAHKYH (145 aa). Threonine 13 carries the post-translational modification Phosphothreonine. Serine 45 carries the post-translational modification Phosphoserine. At lysine 60 the chain carries N6-acetyllysine. Histidine 64 contributes to the heme b binding site. Lysine 83 bears the N6-acetyllysine mark. Residue histidine 93 coordinates heme b. Cysteine 94 is subject to S-nitrosocysteine. An N6-acetyllysine modification is found at lysine 145.

This sequence belongs to the globin family. In terms of assembly, heterotetramer of two alpha chains and two beta chains. Red blood cells.

Involved in oxygen transport from the lung to the various peripheral tissues. This Eulemur fulvus fulvus (Brown lemur) protein is Hemoglobin subunit beta (HBB).